Here is a 355-residue protein sequence, read N- to C-terminus: Glucokinase (355 aa).

An ATP-binding site is contributed by 11–16 (GDIGGT).

It belongs to the bacterial glucokinase family.

It is found in the cytoplasm. The catalysed reaction is D-glucose + ATP = D-glucose 6-phosphate + ADP + H(+). The chain is Glucokinase from Synechocystis sp. (strain ATCC 27184 / PCC 6803 / Kazusa).